A 256-amino-acid chain; its full sequence is Type III pantothenate kinase (256 aa).

Residue 6 to 13 participates in ATP binding; it reads DVGNSHIY. Substrate is bound by residues Y99 and 106 to 109; that span reads GADR. Residue D108 is the Proton acceptor of the active site. D129 contacts K(+). T132 provides a ligand contact to ATP. T184 is a binding site for substrate.

This sequence belongs to the type III pantothenate kinase family. In terms of assembly, homodimer. NH4(+) is required as a cofactor. The cofactor is K(+).

It localises to the cytoplasm. The enzyme catalyses (R)-pantothenate + ATP = (R)-4'-phosphopantothenate + ADP + H(+). The protein operates within cofactor biosynthesis; coenzyme A biosynthesis; CoA from (R)-pantothenate: step 1/5. In terms of biological role, catalyzes the phosphorylation of pantothenate (Pan), the first step in CoA biosynthesis. This chain is Type III pantothenate kinase, found in Legionella pneumophila (strain Paris).